The chain runs to 193 residues: Deoxycytidylate deaminase (193 aa).

The CMP/dCMP-type deaminase domain maps to 1 to 171 (MKASTVLQIA…DILRNAGIEV (171 aa)). Zn(2+) is bound by residues C19, C49, H94, E102, and H104. E106 serves as the catalytic Proton donor. Residues C132 and C135 each coordinate Zn(2+). Y153 is a substrate binding site.

It belongs to the cytidine and deoxycytidylate deaminase family. Homohexamer. Zn(2+) serves as cofactor.

It catalyses the reaction dCMP + H2O + H(+) = dUMP + NH4(+). With respect to regulation, allosteric enzyme whose activity is greatly influenced by the end products of its metabolic pathway, dCTP and dTTP. Its function is as follows. Supplies the nucleotide substrate for thymidylate synthetase. The chain is Deoxycytidylate deaminase (CD) from Escherichia coli (Bacteriophage T4).